Here is a 360-residue protein sequence, read N- to C-terminus: Peptide chain release factor 1 (360 aa).

The residue at position 234 (glutamine 234) is an N5-methylglutamine.

The protein belongs to the prokaryotic/mitochondrial release factor family. In terms of processing, methylated by PrmC. Methylation increases the termination efficiency of RF1.

It is found in the cytoplasm. Its function is as follows. Peptide chain release factor 1 directs the termination of translation in response to the peptide chain termination codons UAG and UAA. The sequence is that of Peptide chain release factor 1 from Renibacterium salmoninarum (strain ATCC 33209 / DSM 20767 / JCM 11484 / NBRC 15589 / NCIMB 2235).